The primary structure comprises 441 residues: COBRA-like protein 2 (441 aa).

Residues 1–28 form the signal peptide; it reads MNILFSRFSFLLLFLCSWTSFTFTTTEA. Asn37, Asn162, Asn170, Asn209, Asn234, Asn249, Asn314, Asn329, and Asn348 each carry an N-linked (GlcNAc...) asparagine glycan. Asn417 carries the GPI-anchor amidated asparagine lipid modification. Positions 418-441 are cleaved as a propeptide — removed in mature form; sequence ASPNIATSPFVILLITFLSVLILM.

This sequence belongs to the COBRA family. Expressed in roots, stems, leaves, flowers and siliques.

It is found in the cell membrane. The polypeptide is COBRA-like protein 2 (COBL2) (Arabidopsis thaliana (Mouse-ear cress)).